The following is a 169-amino-acid chain: Glycine-rich RNA-binding protein GRP2A (169 aa).

In terms of domain architecture, RRM spans 8 to 86 (YRCFVGGLAW…RSITVNEAQS (79 aa)). 2 disordered regions span residues 69 to 100 (MNGQ…GGGG) and 125 to 169 (YSGG…GGGW). The segment covering 89–100 (SGAGGGGRGGGG) has biased composition (gly residues).

Predominantly expressed in meristematic and growing tissue.

The protein resides in the nucleus. Its function is as follows. May play a general role in circadian phenomena associated with meristematic tissue. This chain is Glycine-rich RNA-binding protein GRP2A, found in Sinapis alba (White mustard).